The primary structure comprises 179 residues: Large ribosomal subunit protein uL5 (179 aa).

Belongs to the universal ribosomal protein uL5 family. Part of the 50S ribosomal subunit; part of the 5S rRNA/L5/L18/L25 subcomplex. Contacts the 5S rRNA and the P site tRNA. Forms a bridge to the 30S subunit in the 70S ribosome.

Functionally, this is one of the proteins that bind and probably mediate the attachment of the 5S RNA into the large ribosomal subunit, where it forms part of the central protuberance. In the 70S ribosome it contacts protein S13 of the 30S subunit (bridge B1b), connecting the 2 subunits; this bridge is implicated in subunit movement. Contacts the P site tRNA; the 5S rRNA and some of its associated proteins might help stabilize positioning of ribosome-bound tRNAs. This chain is Large ribosomal subunit protein uL5, found in Bacillus anthracis (strain A0248).